The following is a 279-amino-acid chain: Tryptophan synthase alpha chain (279 aa).

Catalysis depends on proton acceptor residues Glu-50 and Asp-61.

This sequence belongs to the TrpA family. In terms of assembly, tetramer of two alpha and two beta chains.

The catalysed reaction is (1S,2R)-1-C-(indol-3-yl)glycerol 3-phosphate + L-serine = D-glyceraldehyde 3-phosphate + L-tryptophan + H2O. The protein operates within amino-acid biosynthesis; L-tryptophan biosynthesis; L-tryptophan from chorismate: step 5/5. The alpha subunit is responsible for the aldol cleavage of indoleglycerol phosphate to indole and glyceraldehyde 3-phosphate. The chain is Tryptophan synthase alpha chain from Azorhizobium caulinodans (strain ATCC 43989 / DSM 5975 / JCM 20966 / LMG 6465 / NBRC 14845 / NCIMB 13405 / ORS 571).